The chain runs to 645 residues: Protein disulfide-isomerase A4 (645 aa).

An N-terminal signal peptide occupies residues 1–20 (MRPRKAFLLLLLLGLVQLLA). Thioredoxin domains lie at 21–169 (VAGA…EVSQ) and 158–301 (EEIV…EFLK). The tract at residues 24–58 (AEGPDEDSSNRENAIEDEEEEEEEDDDEEEDDLEV) is disordered. Over residues 38-58 (IEDEEEEEEEDDDEEEDDLEV) the composition is skewed to acidic residues. A CXXC motif is present at residues 91-94 (CGHC). Cystine bridges form between C91/C94 and C206/C209. N6-acetyllysine is present on K366. The 132-residue stretch at 505 to 636 (FKKGKLKPVI…LSKFIEEHAT (132 aa)) folds into the Thioredoxin 3 domain. The CXXC motif lies at 555 to 558 (CGHC). C555 and C558 are oxidised to a cystine. The Prevents secretion from ER signature appears at 642-645 (KEEL).

This sequence belongs to the protein disulfide isomerase family. Part of a large chaperone multiprotein complex comprising DNAJB11, HSP90B1, HSPA5, HYOU, PDIA2, PDIA4, PDIA6, PPIB, SDF2L1, UGGT1 and very small amounts of ERP29, but not, or at very low levels, CALR nor CANX. Component of a complex containing at least CRELD2, MANF, MATN3 and PDIA4. As to quaternary structure, (Microbial infection) Interacts with Human astrovirus-1 and Human astrovirus-8 spike protein VP25; this interaction seems to facilitate the uncoating during virus entry into the cell. Does not interact with Human astrovirus-2 spike protein VP25.

Its subcellular location is the endoplasmic reticulum lumen. It localises to the melanosome. The enzyme catalyses Catalyzes the rearrangement of -S-S- bonds in proteins.. In Homo sapiens (Human), this protein is Protein disulfide-isomerase A4 (PDIA4).